A 197-amino-acid chain; its full sequence is 3-isopropylmalate dehydratase small subunit (197 aa).

This sequence belongs to the LeuD family. LeuD type 1 subfamily. Heterodimer of LeuC and LeuD.

The catalysed reaction is (2R,3S)-3-isopropylmalate = (2S)-2-isopropylmalate. The protein operates within amino-acid biosynthesis; L-leucine biosynthesis; L-leucine from 3-methyl-2-oxobutanoate: step 2/4. Catalyzes the isomerization between 2-isopropylmalate and 3-isopropylmalate, via the formation of 2-isopropylmaleate. The sequence is that of 3-isopropylmalate dehydratase small subunit from Streptomyces avermitilis (strain ATCC 31267 / DSM 46492 / JCM 5070 / NBRC 14893 / NCIMB 12804 / NRRL 8165 / MA-4680).